A 139-amino-acid polypeptide reads, in one-letter code: Phosphoribosyl-AMP cyclohydrolase (139 aa).

Position 91 (aspartate 91) interacts with Mg(2+). Residue cysteine 92 participates in Zn(2+) binding. Mg(2+) is bound by residues aspartate 93 and aspartate 95. The Zn(2+) site is built by cysteine 110 and cysteine 117.

This sequence belongs to the PRA-CH family. Homodimer. The cofactor is Mg(2+). Zn(2+) is required as a cofactor.

The protein resides in the cytoplasm. It catalyses the reaction 1-(5-phospho-beta-D-ribosyl)-5'-AMP + H2O = 1-(5-phospho-beta-D-ribosyl)-5-[(5-phospho-beta-D-ribosylamino)methylideneamino]imidazole-4-carboxamide. It functions in the pathway amino-acid biosynthesis; L-histidine biosynthesis; L-histidine from 5-phospho-alpha-D-ribose 1-diphosphate: step 3/9. Its function is as follows. Catalyzes the hydrolysis of the adenine ring of phosphoribosyl-AMP. The protein is Phosphoribosyl-AMP cyclohydrolase of Brucella canis (strain ATCC 23365 / NCTC 10854 / RM-666).